The following is a 303-amino-acid chain: Signal recognition particle receptor FtsY (303 aa).

GTP contacts are provided by residues 108 to 115, 190 to 194, and 254 to 257; these read GVNGAGKT, DTAGR, and TKLD.

The protein belongs to the GTP-binding SRP family. FtsY subfamily. As to quaternary structure, part of the signal recognition particle protein translocation system, which is composed of SRP and FtsY. SRP is a ribonucleoprotein composed of Ffh and a 4.5S RNA molecule.

It localises to the cell inner membrane. It is found in the cytoplasm. The catalysed reaction is GTP + H2O = GDP + phosphate + H(+). Involved in targeting and insertion of nascent membrane proteins into the cytoplasmic membrane. Acts as a receptor for the complex formed by the signal recognition particle (SRP) and the ribosome-nascent chain (RNC). Interaction with SRP-RNC leads to the transfer of the RNC complex to the Sec translocase for insertion into the membrane, the hydrolysis of GTP by both Ffh and FtsY, and the dissociation of the SRP-FtsY complex into the individual components. The chain is Signal recognition particle receptor FtsY from Rickettsia felis (strain ATCC VR-1525 / URRWXCal2) (Rickettsia azadi).